Reading from the N-terminus, the 96-residue chain is Co-chaperonin GroES (96 aa).

This sequence belongs to the GroES chaperonin family. In terms of assembly, heptamer of 7 subunits arranged in a ring. Interacts with the chaperonin GroEL.

It is found in the cytoplasm. In terms of biological role, together with the chaperonin GroEL, plays an essential role in assisting protein folding. The GroEL-GroES system forms a nano-cage that allows encapsulation of the non-native substrate proteins and provides a physical environment optimized to promote and accelerate protein folding. GroES binds to the apical surface of the GroEL ring, thereby capping the opening of the GroEL channel. This is Co-chaperonin GroES from Shewanella baltica (strain OS223).